The chain runs to 264 residues: 3-methyl-2-oxobutanoate hydroxymethyltransferase (264 aa).

Positions 45 and 84 each coordinate Mg(2+). 3-methyl-2-oxobutanoate is bound by residues 45-46 (DS), Asp-84, and Lys-112. Position 114 (Glu-114) interacts with Mg(2+). Residue Glu-181 is the Proton acceptor of the active site.

It belongs to the PanB family. As to quaternary structure, homodecamer; pentamer of dimers. The cofactor is Mg(2+).

It is found in the cytoplasm. The enzyme catalyses 3-methyl-2-oxobutanoate + (6R)-5,10-methylene-5,6,7,8-tetrahydrofolate + H2O = 2-dehydropantoate + (6S)-5,6,7,8-tetrahydrofolate. The protein operates within cofactor biosynthesis; (R)-pantothenate biosynthesis; (R)-pantoate from 3-methyl-2-oxobutanoate: step 1/2. Its function is as follows. Catalyzes the reversible reaction in which hydroxymethyl group from 5,10-methylenetetrahydrofolate is transferred onto alpha-ketoisovalerate to form ketopantoate. This chain is 3-methyl-2-oxobutanoate hydroxymethyltransferase, found in Pectobacterium atrosepticum (strain SCRI 1043 / ATCC BAA-672) (Erwinia carotovora subsp. atroseptica).